The primary structure comprises 320 residues: Homeobox-leucine zipper protein HOX25 (320 aa).

Residues 79 to 139 constitute a DNA-binding region (homeobox); the sequence is AAARKRRLTA…NRRARWKTKQ (61 aa). Positions 138-182 are leucine-zipper; it reads KQLELDFDRLRAAHDELLAGRTALAADNESLRSQVILLTEKLQAN. Disordered stretches follow at residues 181 to 209 and 249 to 282; these read ANGKSPSPSPAPAEQTAVPAAPESAKSFQ and DSPESYFAGARSPPSSSEDDCGGAGSDDDYPSSS. Residues 265 to 278 show a composition bias toward acidic residues; it reads SEDDCGGAGSDDDY.

It belongs to the HD-ZIP homeobox family. Class I subfamily. As to expression, expressed in roots, leaf sheaths and blades and panicles.

The protein resides in the nucleus. Probable transcription factor. This is Homeobox-leucine zipper protein HOX25 (HOX25) from Oryza sativa subsp. japonica (Rice).